A 169-amino-acid chain; its full sequence is Photosystem I assembly protein Ycf3 (169 aa).

TPR repeat units follow at residues 35–68 (AFSY…EIDP), 72–105 (SYIL…NPAL), and 120–153 (GEQA…APSN).

This sequence belongs to the Ycf3 family.

The protein localises to the plastid. It localises to the chloroplast thylakoid membrane. Essential for the assembly of the photosystem I (PSI) complex. May act as a chaperone-like factor to guide the assembly of the PSI subunits. In Chaetosphaeridium globosum (Charophycean green alga), this protein is Photosystem I assembly protein Ycf3.